The chain runs to 391 residues: DNA-directed RNA polymerase I subunit RPA43 (391 aa).

Disordered regions lie at residues 1-27 (MANW…SGGS) and 220-391 (QKQV…KKSK). A compositionally biased stretch (basic residues) spans 288-299 (GRHKEKKKKKKR). Residues 289–353 (RHKEKKKKKK…RDKQQDSAEI (65 aa)) adopt a coiled-coil conformation. Positions 312–323 (MNNNSLQETALD) are enriched in polar residues. Positions 336 to 345 (KEKKKKKKRD) are enriched in basic residues.

The protein belongs to the eukaryotic RPA43 RNA polymerase subunit family. Component of the RNA polymerase I (Pol I) complex consisting of at least 13 subunits.

The protein resides in the nucleus. Its subcellular location is the nucleolus. DNA-dependent RNA polymerase catalyzes the transcription of DNA into RNA using the four ribonucleoside triphosphates as substrates. Component of RNA polymerase I which synthesizes ribosomal RNA precursors. May be involved in recruitment of Pol I to rDNA promoters. The chain is DNA-directed RNA polymerase I subunit RPA43 from Danio rerio (Zebrafish).